We begin with the raw amino-acid sequence, 443 residues long: Sulfoquinovose isomerase (443 aa).

This sequence belongs to the SqvD family.

The enzyme catalyses 6-sulfo-beta-D-quinovose = 6-deoxy-6-sulfo-D-fructose. In terms of biological role, part of the sulfo-EMP2 pathway, a D-sulfoquinovose degradation pathway that produces sulfolactate (SL). Catalyzes the isomerization of sulfoquinovose (SQ) to 6-deoxy-6-sulfo-D-fructose (SF). This Alkalicoccus urumqiensis (Bacillus urumqiensis) protein is Sulfoquinovose isomerase.